The following is a 920-amino-acid chain: Whirlin (920 aa).

The 84-residue stretch at 141–224 (LVSLRRAKAH…LVLSVYSAGR (84 aa)) folds into the PDZ 1 domain. The interval 241-262 (QGRSTSPPSSLPHGSTLRQHED) is disordered. The segment covering 242–257 (GRSTSPPSSLPHGSTL) has biased composition (polar residues). A PDZ 2 domain is found at 278–360 (KVNLVLGDGR…LILTVKDVGR (83 aa)). 4 disordered regions span residues 502–536 (MKAR…TSTT), 561–603 (CETT…QGHD), 630–730 (FSAP…AMGA), and 752–828 (RALP…PTST). Low complexity predominate over residues 520 to 536 (SYSDTGSSTGSHGTSTT). A compositionally biased stretch (polar residues) spans 561–570 (CETTQGSTNA). 2 stretches are compositionally biased toward pro residues: residues 589-598 (IKPPPPPPPL) and 636-651 (RSPP…PTPG). Residues 655–674 (ARDSPSSPIYASISHANPSS) are compositionally biased toward polar residues. The residue at position 698 (serine 698) is a Phosphoserine. Polar residues-rich tracts occupy residues 756-775 (QTRT…TLSE) and 785-800 (EAST…NTKN). The span at 802–813 (NGKELPQTERTT) shows a compositional bias: basic and acidic residues. The region spanning 829-912 (LIRVRKSAAT…TKERDYIDFL (84 aa)) is the PDZ 3 domain.

In terms of assembly, forms homooligomers. Interacts (via C-terminal PDZ domain) with MYO15A; this interaction is necessary for localization of WHRN to stereocilia tips. Interacts (via C-terminal PDZ domain) with MPP1/p55. Interacts with LRRC4C/NGL1. Interacts with MYO7A. Interacts with RPGR. Interacts with EPS8. Interacts with CASK. Interacts with CIB2. Component of USH2 complex, composed of ADGRV1, PDZD7, USH2A and WHRN. Interacts (via PDZ domains) with PDZD7; the interaction is direct. Interacts (via N-terminal PDZ domain) with USH2A (via cytoplasmic region). Interacts with ADGRV1/MASS1 (via cytoplasmic region). As to expression, ubiquitous. Highly expressed in heart, spleen, lung and liver. Highly expressed in brain, in the olfactory bulb, thalamus, layers III-V of the cerebral cortex and the molecular layer of cerebellum. Detected in soma and dendrites of thalamic neurons, and in cerebrum in cell bodies and apical dendrites of pyramidal neurons. Expressed in retina and inner ear.

The protein localises to the cytoplasm. Its subcellular location is the cell projection. It is found in the stereocilium. The protein resides in the growth cone. It localises to the synapse. Functionally, involved in hearing and vision as member of the USH2 complex. Necessary for elongation and maintenance of inner and outer hair cell stereocilia in the organ of Corti in the inner ear. Involved in the maintenance of the hair bundle ankle region, which connects stereocilia in cochlear hair cells of the inner ear. In retina photoreceptors, required for the maintenance of periciliary membrane complex that seems to play a role in regulating intracellular protein transport. This Rattus norvegicus (Rat) protein is Whirlin.